A 1323-amino-acid chain; its full sequence is Alpha-factor-transporting ATPase (1323 aa).

The span at 1–10 shows a compositional bias: basic and acidic residues; sequence MFQEKSEKSS. The tract at residues 1 to 23 is disordered; sequence MFQEKSEKSSFPKRSSSLRSPSD. Low complexity predominate over residues 12–23; that stretch reads PKRSSSLRSPSD. Asn37 carries an N-linked (GlcNAc...) asparagine glycan. The chain crosses the membrane as a helical span at residues 42–62; that stretch reads WPLILVGILLMGGSAIATLMN. One can recognise an ABC transmembrane type-1 1 domain in the interval 45–337; sequence ILVGILLMGG…ITELLAILNT (293 aa). Residue Asn83 is glycosylated (N-linked (GlcNAc...) asparagine). A helical transmembrane segment spans residues 93 to 113; it reads LCVGLIGIGCCKMILVWLGMF. N-linked (GlcNAc...) asparagine glycosylation is present at Asn136. The next 4 membrane-spanning stretches (helical) occupy residues 169-189, 192-212, 281-301, and 315-335; these read ILAS…MSFY, WSTT…GWYF, VLKT…NYLL, and FSSC…LAIL. Residues 373–609 form the ABC transporter 1 domain; that stretch reads IYFKNVWFES…EIVQNYKSQG (237 aa). 408–415 is an ATP binding site; sequence GKSGSGKS. A glycan (N-linked (GlcNAc...) asparagine) is linked at Asn450. The chain crosses the membrane as a helical span at residues 677 to 697; that stretch reads LLGFGILLAIFQGVSSPVFSY. Residues 678 to 969 form the ABC transmembrane type-1 2 domain; it reads LGFGILLAIF…LIHQLPEITR (292 aa). The N-linked (GlcNAc...) asparagine glycan is linked to Asn714. The helical transmembrane segment at 724–744 threads the bilayer; that stretch reads CISLSIAIFTGVTSYLSEFIL. N-linked (GlcNAc...) asparagine glycosylation is found at Asn777 and Asn789. Transmembrane regions (helical) follow at residues 801-821, 828-848, and 909-929; these read FFPL…WSIV, LVGI…GKIL, and IGFA…LFYG. Asn939 is a glycosylation site (N-linked (GlcNAc...) asparagine). The chain crosses the membrane as a helical span at residues 941 to 961; sequence SQLLQVITLLSFTISNASILI. Asn991, Asn1030, and Asn1039 each carry an N-linked (GlcNAc...) asparagine glycan. In terms of domain architecture, ABC transporter 2 spans 1035–1321; that stretch reads ISFNNVSFSY…DGEFTKITKT (287 aa). 1071-1078 contributes to the ATP binding site; it reads GQSGSGKS. A glycan (N-linked (GlcNAc...) asparagine) is linked at Asn1097. The chain crosses the membrane as a helical span at residues 1120–1140; the sequence is GLLCQTIAIVPQFPKFFSGTI. Asn1143, Asn1149, and Asn1157 each carry an N-linked (GlcNAc...) asparagine glycan. A helical membrane pass occupies residues 1170–1190; sequence ILKLVNLHQFIVSLPQGLLTI. Residue Asn1192 is glycosylated (N-linked (GlcNAc...) asparagine). Residues 1194–1208 show a composition bias toward acidic residues; it reads SDNDNDNGNENENEN. The disordered stretch occupies residues 1194-1217; that stretch reads SDNDNDNGNENENENENGNTISTS.

Belongs to the ABC transporter superfamily. Alpha-factor sex pheromone exporter (TC 3.A.1.206) family.

The protein resides in the membrane. The enzyme catalyses an [alpha-factor](in) + ATP + H2O = an [alpha-factor](out) + ADP + phosphate + H(+). The polypeptide is Alpha-factor-transporting ATPase (HST6) (Candida albicans (strain WO-1) (Yeast)).